Here is a 195-residue protein sequence, read N- to C-terminus: Peptidyl-tRNA hydrolase (195 aa).

Tyr-17 serves as a coordination point for tRNA. The active-site Proton acceptor is His-22. TRNA is bound by residues Tyr-68, Asn-70, and Asn-116.

This sequence belongs to the PTH family. As to quaternary structure, monomer.

The protein resides in the cytoplasm. It catalyses the reaction an N-acyl-L-alpha-aminoacyl-tRNA + H2O = an N-acyl-L-amino acid + a tRNA + H(+). Hydrolyzes ribosome-free peptidyl-tRNAs (with 1 or more amino acids incorporated), which drop off the ribosome during protein synthesis, or as a result of ribosome stalling. In terms of biological role, catalyzes the release of premature peptidyl moieties from peptidyl-tRNA molecules trapped in stalled 50S ribosomal subunits, and thus maintains levels of free tRNAs and 50S ribosomes. This is Peptidyl-tRNA hydrolase from Shewanella oneidensis (strain ATCC 700550 / JCM 31522 / CIP 106686 / LMG 19005 / NCIMB 14063 / MR-1).